We begin with the raw amino-acid sequence, 334 residues long: Fructose-1,6-bisphosphatase class 1 (334 aa).

E89, D112, L114, and D115 together coordinate Mg(2+). Substrate-binding positions include 115 to 118 (DGSS), N208, Y241, and K271. Mg(2+) is bound at residue E277.

It belongs to the FBPase class 1 family. In terms of assembly, homotetramer. Mg(2+) serves as cofactor.

The protein resides in the cytoplasm. It catalyses the reaction beta-D-fructose 1,6-bisphosphate + H2O = beta-D-fructose 6-phosphate + phosphate. It participates in carbohydrate biosynthesis; gluconeogenesis. In Serratia proteamaculans (strain 568), this protein is Fructose-1,6-bisphosphatase class 1.